The chain runs to 332 residues: N-acetyl-gamma-glutamyl-phosphate reductase (332 aa).

C144 is a catalytic residue.

This sequence belongs to the NAGSA dehydrogenase family. Type 1 subfamily.

The protein resides in the cytoplasm. The catalysed reaction is N-acetyl-L-glutamate 5-semialdehyde + phosphate + NADP(+) = N-acetyl-L-glutamyl 5-phosphate + NADPH + H(+). It participates in amino-acid biosynthesis; L-arginine biosynthesis; N(2)-acetyl-L-ornithine from L-glutamate: step 3/4. Catalyzes the NADPH-dependent reduction of N-acetyl-5-glutamyl phosphate to yield N-acetyl-L-glutamate 5-semialdehyde. The polypeptide is N-acetyl-gamma-glutamyl-phosphate reductase (Archaeoglobus fulgidus (strain ATCC 49558 / DSM 4304 / JCM 9628 / NBRC 100126 / VC-16)).